The sequence spans 348 residues: Dihydroorotase (348 aa).

Residues H14 and H16 each coordinate Zn(2+). Substrate is bound by residues 16–18 and N42; that span reads HLR. Zn(2+)-binding residues include K100, H137, and H175. At K100 the chain carries N6-carboxylysine. H137 provides a ligand contact to substrate. Substrate is bound at residue L220. D248 contributes to the Zn(2+) binding site. D248 is a catalytic residue. The substrate site is built by H252 and A264.

The protein belongs to the metallo-dependent hydrolases superfamily. DHOase family. Class II DHOase subfamily. As to quaternary structure, homodimer. Zn(2+) is required as a cofactor.

The enzyme catalyses (S)-dihydroorotate + H2O = N-carbamoyl-L-aspartate + H(+). It participates in pyrimidine metabolism; UMP biosynthesis via de novo pathway; (S)-dihydroorotate from bicarbonate: step 3/3. In terms of biological role, catalyzes the reversible cyclization of carbamoyl aspartate to dihydroorotate. In Pseudomonas putida (strain ATCC 700007 / DSM 6899 / JCM 31910 / BCRC 17059 / LMG 24140 / F1), this protein is Dihydroorotase.